Consider the following 159-residue polypeptide: Ribosomal RNA large subunit methyltransferase H (159 aa).

S-adenosyl-L-methionine contacts are provided by residues Leu76, Gly108, and Phe127–Leu132.

The protein belongs to the RNA methyltransferase RlmH family. In terms of assembly, homodimer.

The protein localises to the cytoplasm. It catalyses the reaction pseudouridine(1915) in 23S rRNA + S-adenosyl-L-methionine = N(3)-methylpseudouridine(1915) in 23S rRNA + S-adenosyl-L-homocysteine + H(+). Specifically methylates the pseudouridine at position 1915 (m3Psi1915) in 23S rRNA. In Leuconostoc mesenteroides subsp. mesenteroides (strain ATCC 8293 / DSM 20343 / BCRC 11652 / CCM 1803 / JCM 6124 / NCDO 523 / NBRC 100496 / NCIMB 8023 / NCTC 12954 / NRRL B-1118 / 37Y), this protein is Ribosomal RNA large subunit methyltransferase H.